The primary structure comprises 219 residues: Histone H1.4 (219 aa).

Positions 1 to 15 (MSETAPAAPAAPAPA) are enriched in low complexity. The disordered stretch occupies residues 1 to 41 (MSETAPAAPAAPAPAEKTPVKKKARKAAGGAKRKTSGPPVS). The residue at position 2 (S2) is an N-acetylserine. Phosphoserine is present on S2. Position 17 is an N6-acetyllysine (K17). T18 is subject to Phosphothreonine. Residues 20 to 35 (VKKKARKAAGGAKRKT) are compositionally biased toward basic residues. K26 is modified (N6-acetyllysine; alternate). The residue at position 26 (K26) is an N6-methyllysine; alternate. Position 34 is an N6-(beta-hydroxybutyryl)lysine; alternate (K34). K34 is modified (N6-succinyllysine; alternate). S36 carries the post-translational modification Phosphoserine. Residues 36–109 (SGPPVSELIT…GASGSFKLNK (74 aa)) enclose the H15 domain. Position 52 is an N6-(beta-hydroxybutyryl)lysine (K52). R54 bears the Citrulline mark. An N6-(beta-hydroxybutyryl)lysine mark is found at K64, K85, K90, and K106. The interval 92–219 (TLVQTKGTGA…KPKKTAAKKK (128 aa)) is disordered. Basic residues predominate over residues 119-140 (KAKRAGAAKAKKPAGAAKKPKK). At T146 the chain carries Phosphothreonine. Composition is skewed to basic residues over residues 149–160 (KSTKKTPKKAKK) and 168–185 (KKAK…KKAP). At S150 the chain carries ADP-ribosylserine. A Phosphoserine modification is found at S187. The span at 192–219 (KTVKPKAAKPKTSKPKAAKPKKTAAKKK) shows a compositional bias: basic residues.

Belongs to the histone H1/H5 family. In terms of processing, citrullination at Arg-54 (H1R54ci) by PADI4 takes place within the DNA-binding site of H1 and results in its displacement from chromatin and global chromatin decondensation, thereby promoting pluripotency and stem cell maintenance. ADP-ribosylated on Ser-55, Ser-113 and Ser-150 in response to DNA damage. Post-translationally, H1 histones are progressively phosphorylated during the cell cycle, becoming maximally phosphorylated during late G2 phase and M phase, and being dephosphorylated sharply thereafter. In terms of processing, acetylated at Lys-26. Deacetylated at Lys-26 by SIRT1. Hydroxybutyrylation of histones is induced by starvation.

It is found in the nucleus. It localises to the chromosome. Histone H1 protein binds to linker DNA between nucleosomes forming the macromolecular structure known as the chromatin fiber. Histones H1 are necessary for the condensation of nucleosome chains into higher-order structured fibers. Also acts as a regulator of individual gene transcription through chromatin remodeling, nucleosome spacing and DNA methylation. This is Histone H1.4 from Mus musculus (Mouse).